The sequence spans 245 residues: Ribonuclease 3 (245 aa).

Residues 17-146 (FTDKMKSLGL…FVGALYLDQG (130 aa)) enclose the RNase III domain. Mg(2+) is bound at residue glutamate 59. Aspartate 63 is a catalytic residue. Mg(2+) contacts are provided by aspartate 132 and glutamate 135. The active site involves glutamate 135. One can recognise a DRBM domain in the interval 172–241 (DFKTQFQEYV…AEQAYKLMKN (70 aa)).

Belongs to the ribonuclease III family. As to quaternary structure, homodimer. Mg(2+) serves as cofactor.

It is found in the cytoplasm. The catalysed reaction is Endonucleolytic cleavage to 5'-phosphomonoester.. Functionally, digests double-stranded RNA. Involved in the processing of primary rRNA transcript to yield the immediate precursors to the large and small rRNAs (23S and 16S). Processes some mRNAs, and tRNAs when they are encoded in the rRNA operon. Processes pre-crRNA and tracrRNA of type II CRISPR loci if present in the organism. The sequence is that of Ribonuclease 3 from Staphylococcus epidermidis (strain ATCC 35984 / DSM 28319 / BCRC 17069 / CCUG 31568 / BM 3577 / RP62A).